A 120-amino-acid chain; its full sequence is NADH-ubiquinone oxidoreductase chain 3 (120 aa).

The next 3 membrane-spanning stretches (helical) occupy residues 8-28, 63-83, and 90-110; these read YFILFTYIIISFILACIISLL, FYLVAILFFNFCLEISFLFPW, and ISYFGFVAIILFLFILTIGFI.

The protein belongs to the complex I subunit 3 family.

The protein resides in the mitochondrion membrane. The catalysed reaction is a ubiquinone + NADH + 5 H(+)(in) = a ubiquinol + NAD(+) + 4 H(+)(out). Its function is as follows. Core subunit of the mitochondrial membrane respiratory chain NADH dehydrogenase (Complex I) that is believed to belong to the minimal assembly required for catalysis. Complex I functions in the transfer of electrons from NADH to the respiratory chain. The immediate electron acceptor for the enzyme is believed to be ubiquinone. This Cyanidium caldarium (Red alga) protein is NADH-ubiquinone oxidoreductase chain 3 (ND3).